Reading from the N-terminus, the 58-residue chain is Arabinogalactan protein 21 (58 aa).

Residues 1–24 (MEAMKMKMMVFIMVVAVAFSAATA) form the signal peptide. Pro-30, Pro-32, and Pro-34 each carry 4-hydroxyproline. 3 O-linked (Ara...) hydroxyproline glycosylation sites follow: Pro-30, Pro-32, and Pro-34. Residue Ser-36 is the site of GPI-anchor amidated serine attachment. The propeptide at 37–58 (DAAMFVPALFASVVALASGFIF) is removed in mature form.

It belongs to the AG-peptide AGP family. Contains 4-hydroxyproline; hydroxylated on Pro-30, Pro-32 and Pro-34. In terms of processing, O-glycosylated on hydroxyprolines; noncontiguous hydroxylproline residues are glycosylated with arabinogalactan.

It is found in the cell membrane. Its function is as follows. Proteoglycan that seems to be implicated in diverse developmental roles such as differentiation, cell-cell recognition, embryogenesis and programmed cell death. This is Arabinogalactan protein 21 from Arabidopsis thaliana (Mouse-ear cress).